A 318-amino-acid polypeptide reads, in one-letter code: Nitrate reductase [NADH] (318 aa).

The Cytochrome b5 heme-binding domain maps to 216-291 (AKSFTMAEVE…LLEYYIGELA (76 aa)). Positions 251 and 274 each coordinate heme.

This sequence belongs to the nitrate reductase family. As to quaternary structure, homodimer. Requires FAD as cofactor. Heme is required as a cofactor. Mo-molybdopterin serves as cofactor.

The enzyme catalyses nitrite + NAD(+) + H2O = nitrate + NADH + H(+). In terms of biological role, nitrate reductase is a key enzyme involved in the first step of nitrate assimilation in plants, fungi and bacteria. The sequence is that of Nitrate reductase [NADH] from Chlorella vulgaris (Green alga).